The primary structure comprises 308 residues: Pantothenate synthetase (308 aa).

Position 39–46 (39–46 (MGALHDGH)) interacts with ATP. Histidine 46 acts as the Proton donor in catalysis. Glutamine 71 is a (R)-pantoate binding site. Glutamine 71 lines the beta-alanine pocket. 157 to 160 (GEKD) is an ATP binding site. Glutamine 163 provides a ligand contact to (R)-pantoate. Residues valine 186 and 194 to 197 (MSSR) contribute to the ATP site. The disordered stretch occupies residues 286–308 (IETPAGTAGPDGDRQYAQSPWRN).

Belongs to the pantothenate synthetase family. As to quaternary structure, homodimer.

The protein localises to the cytoplasm. It catalyses the reaction (R)-pantoate + beta-alanine + ATP = (R)-pantothenate + AMP + diphosphate + H(+). It participates in cofactor biosynthesis; (R)-pantothenate biosynthesis; (R)-pantothenate from (R)-pantoate and beta-alanine: step 1/1. Functionally, catalyzes the condensation of pantoate with beta-alanine in an ATP-dependent reaction via a pantoyl-adenylate intermediate. In Mycolicibacterium paratuberculosis (strain ATCC BAA-968 / K-10) (Mycobacterium paratuberculosis), this protein is Pantothenate synthetase.